Reading from the N-terminus, the 376-residue chain is Chaperone protein DnaJ (376 aa).

The region spanning 5 to 70 (DFYEVLGVER…SKRAAYDQYG (66 aa)) is the J domain. The segment at 135–213 (GTTVTIRVPT…CHGQGRVEEQ (79 aa)) adopts a CR-type zinc-finger fold. The Zn(2+) site is built by cysteine 148, cysteine 151, cysteine 165, cysteine 168, cysteine 187, cysteine 190, cysteine 201, and cysteine 204. CXXCXGXG motif repeat units follow at residues 148 to 155 (CKTCDGSG), 165 to 172 (CTTCGGIG), 187 to 194 (CPRCHGSG), and 201 to 208 (CGSCHGQG).

This sequence belongs to the DnaJ family. In terms of assembly, homodimer. Zn(2+) is required as a cofactor.

The protein localises to the cytoplasm. Functionally, participates actively in the response to hyperosmotic and heat shock by preventing the aggregation of stress-denatured proteins and by disaggregating proteins, also in an autonomous, DnaK-independent fashion. Unfolded proteins bind initially to DnaJ; upon interaction with the DnaJ-bound protein, DnaK hydrolyzes its bound ATP, resulting in the formation of a stable complex. GrpE releases ADP from DnaK; ATP binding to DnaK triggers the release of the substrate protein, thus completing the reaction cycle. Several rounds of ATP-dependent interactions between DnaJ, DnaK and GrpE are required for fully efficient folding. Also involved, together with DnaK and GrpE, in the DNA replication of plasmids through activation of initiation proteins. The chain is Chaperone protein DnaJ from Stutzerimonas stutzeri (Pseudomonas stutzeri).